Reading from the N-terminus, the 442-residue chain is Terpene cyclase aneC (442 aa).

The Mg(2+) site is built by Asp-196, Asn-327, Ser-331, and Glu-335. (2E,6E)-farnesyl diphosphate is bound by residues Arg-419 and Tyr-420.

Belongs to the terpene synthase family. As to quaternary structure, homodimer. The cofactor is Mg(2+).

The enzyme catalyses (2E,6E)-farnesyl diphosphate = dauca-4,7-diene + diphosphate. It functions in the pathway secondary metabolite biosynthesis. Terpene cyclase; part of the gene cluster that mediates the biosynthesis of aculenes, a unique type of norsesquiterpenes that contain a nordaucane skeleton linked to an L-proline moiety and are of mixed biosynthetic origin. The pathway begins with the synthesis of dauca-4,7-diene by the terpene cyclase aneC using farnesyl pyrophosphate (FPP) as substrate. The cytochrome P450 monooxygenase aneF then performs the initial oxidation at C-12 of dauca-4,7-diene to yield asperaculane D. Asperaculane D is substrate of the cytochrome P450 monooxygenase aneD for C-10 hydroxylation to yield asperaculane E. The cytochrome P450 monooxygenase aneG then converts asperaculane E into aculene D via C-2 oxidation. The monomodular nonribosomal peptide synthtase aneB adenylates L-proline and the thiohydrolase aneE transfers this activated L-proline derivative to aculenes D and C to produce respectively aculenes B and A. The dioxygenase aneA converts aculene D into aculene C, and aculene B into aculene A by introducing the 5,6-alkene moiety. Asperculanes A, B, C and F, as well as 14-prolyl asperculane C, might be shunt products of the pathway. The chain is Terpene cyclase aneC from Aspergillus aculeatus (strain ATCC 16872 / CBS 172.66 / WB 5094).